A 414-amino-acid polypeptide reads, in one-letter code: Solute carrier family 25 member 46-B (414 aa).

Over residues 1–13 the composition is skewed to basic and acidic residues; that stretch reads MQPRRPDRFDGLE. The disordered stretch occupies residues 1–89; it reads MQPRRPDRFD…AFGEENSGSS (89 aa). The span at 29-50 shows a compositional bias: polar residues; that stretch reads YQSSFPARSLSSSGDLSQQWVT. A Solcar 1 repeat occupies 92-183; that stretch reads QVNRFAGFGI…GMLSEFTHLP (92 aa). 6 consecutive transmembrane segments (helical) span residues 99–119, 159–179, 198–218, 254–274, 310–330, and 379–399; these read FGIG…CIVL, MGST…LSEF, HLLL…ASLI, LLPL…HYII, FPEL…LYPL, and LGFY…AIVL. One copy of the Solcar 2 repeat lies at 307–412; it reads EDYFPELLAN…KIIYSSVVQT (106 aa).

Belongs to the mitochondrial carrier (TC 2.A.29) family.

It is found in the mitochondrion outer membrane. In terms of biological role, may play a role in mitochondrial dynamics by controlling mitochondrial membrane fission. The polypeptide is Solute carrier family 25 member 46-B (slc25a46-b) (Xenopus laevis (African clawed frog)).